The sequence spans 152 residues: MANLERTFIAIKPDGVQRGLVGEIIKRFEQKGFRLVAMKFLRASEEHLKQHYTDLKDRPFFPGLVKYMNSGPVVAMVWEGLNVVKTGRLMLGETNPADSKPGTIRGDFCIQVGRNIIHGSDSVKSAEKEISLWFKPEELVDYKSCAHDWVYE.

Positions 1–66 are interaction with AKAP13; the sequence is MANLERTFIA…DRPFFPGLVK (66 aa). The ATP site is built by lysine 12, phenylalanine 60, arginine 88, threonine 94, arginine 105, and asparagine 115. Residue histidine 118 is the Pros-phosphohistidine intermediate of the active site.

This sequence belongs to the NDK family. In terms of assembly, hexamer of two different chains: An and B (A6, A5B, A4B2, A3B3, A2B4, AB5, B6). Interacts with CAPN8. Interacts with AKAP13. Interacts with ITGB1BP1 (via C-terminal domain region). Interacts with BCL2L10. The cofactor is Mg(2+).

The protein resides in the cytoplasm. It is found in the cell projection. Its subcellular location is the lamellipodium. It localises to the ruffle. The protein localises to the nucleus. The enzyme catalyses a 2'-deoxyribonucleoside 5'-diphosphate + ATP = a 2'-deoxyribonucleoside 5'-triphosphate + ADP. The catalysed reaction is a ribonucleoside 5'-diphosphate + ATP = a ribonucleoside 5'-triphosphate + ADP. It carries out the reaction ATP + protein L-histidine = ADP + protein N-phospho-L-histidine.. Major role in the synthesis of nucleoside triphosphates other than ATP. The ATP gamma phosphate is transferred to the NDP beta phosphate via a ping-pong mechanism, using a phosphorylated active-site intermediate. Negatively regulates Rho activity by interacting with AKAP13/LBC. Acts as a transcriptional activator of the MYC gene; binds DNA non-specifically. Binds to both single-stranded guanine- and cytosine-rich strands within the nuclease hypersensitive element (NHE) III(1) region of the MYC gene promoter. Does not bind to duplex NHE III(1). Has G-quadruplex (G4) DNA-binding activity, which is independent of its nucleotide-binding and kinase activity. Binds both folded and unfolded G4 with similar low nanomolar affinities. Stabilizes folded G4s regardless of whether they are prefolded or not. Exhibits histidine protein kinase activity. The polypeptide is Nucleoside diphosphate kinase B (NME2) (Pongo abelii (Sumatran orangutan)).